Consider the following 207-residue polypeptide: Prolactin (207 aa).

The first 20 residues, 1–20 (KSRLYFAVTVLMCAFVSING), serve as a signal peptide directing secretion. Intrachain disulfides connect Cys66–Cys180 and Cys197–Cys207.

This sequence belongs to the somatotropin/prolactin family. In terms of tissue distribution, pituitary gland.

The protein localises to the secreted. This is Prolactin (prl) from Hypophthalmichthys molitrix (Silver carp).